The chain runs to 322 residues: Ferredoxin--NADP reductase (322 aa).

FAD-binding residues include D33, Q41, Y46, A86, F120, D278, and S319.

Belongs to the ferredoxin--NADP reductase type 2 family. As to quaternary structure, homodimer. Requires FAD as cofactor.

It catalyses the reaction 2 reduced [2Fe-2S]-[ferredoxin] + NADP(+) + H(+) = 2 oxidized [2Fe-2S]-[ferredoxin] + NADPH. This chain is Ferredoxin--NADP reductase, found in Salinispora tropica (strain ATCC BAA-916 / DSM 44818 / JCM 13857 / NBRC 105044 / CNB-440).